Here is a 357-residue protein sequence, read N- to C-terminus: Ribonuclease 3 (357 aa).

An RNase III domain is found at 6-155 (IKFIQDQIGY…ILGAIALDSN (150 aa)). Residue glutamate 45 coordinates Mg(2+). The active site involves aspartate 49. Mg(2+) contacts are provided by aspartate 141 and glutamate 144. Residue glutamate 144 is part of the active site. 2 consecutive DRBM domains span residues 198 to 267 (PLHC…YLKD) and 285 to 355 (DSIG…FVLE).

Belongs to the ribonuclease III family. As to quaternary structure, homodimer. Mg(2+) is required as a cofactor.

Its subcellular location is the cytoplasm. The catalysed reaction is Endonucleolytic cleavage to 5'-phosphomonoester.. In terms of biological role, digests double-stranded RNA. Involved in the processing of primary rRNA transcript to yield the immediate precursors to the large and small rRNAs (23S and 16S). Processes some mRNAs, and tRNAs when they are encoded in the rRNA operon. Processes pre-crRNA and tracrRNA of type II CRISPR loci if present in the organism. The polypeptide is Ribonuclease 3 (rnc) (Roseburia hominis (strain DSM 16839 / JCM 17582 / NCIMB 14029 / A2-183)).